The chain runs to 339 residues: Ketol-acid reductoisomerase (NADP(+)) (339 aa).

Residues 1-182 (MRVYYDRDAD…GGGRAGIIET (182 aa)) form the KARI N-terminal Rossmann domain. NADP(+) contacts are provided by residues 24-27 (YGSQ), R48, S51, S53, and 83-86 (DELQ). Residue H108 is part of the active site. G134 is an NADP(+) binding site. The 146-residue stretch at 183-328 (TFKEECETDL…ERLRAMMPWI (146 aa)) folds into the KARI C-terminal knotted domain. Mg(2+) is bound by residues D191, E195, E227, and E231. S252 is a binding site for substrate.

Belongs to the ketol-acid reductoisomerase family. Mg(2+) serves as cofactor.

The enzyme catalyses (2R)-2,3-dihydroxy-3-methylbutanoate + NADP(+) = (2S)-2-acetolactate + NADPH + H(+). It carries out the reaction (2R,3R)-2,3-dihydroxy-3-methylpentanoate + NADP(+) = (S)-2-ethyl-2-hydroxy-3-oxobutanoate + NADPH + H(+). Its pathway is amino-acid biosynthesis; L-isoleucine biosynthesis; L-isoleucine from 2-oxobutanoate: step 2/4. It functions in the pathway amino-acid biosynthesis; L-valine biosynthesis; L-valine from pyruvate: step 2/4. Involved in the biosynthesis of branched-chain amino acids (BCAA). Catalyzes an alkyl-migration followed by a ketol-acid reduction of (S)-2-acetolactate (S2AL) to yield (R)-2,3-dihydroxy-isovalerate. In the isomerase reaction, S2AL is rearranged via a Mg-dependent methyl migration to produce 3-hydroxy-3-methyl-2-ketobutyrate (HMKB). In the reductase reaction, this 2-ketoacid undergoes a metal-dependent reduction by NADPH to yield (R)-2,3-dihydroxy-isovalerate. The polypeptide is Ketol-acid reductoisomerase (NADP(+)) (Methylobacterium nodulans (strain LMG 21967 / CNCM I-2342 / ORS 2060)).